Here is a 547-residue protein sequence, read N- to C-terminus: Chaperonin GroEL (547 aa).

ATP contacts are provided by residues 29–32, Lys-50, 86–90, Gly-414, and Asp-495; these read TLGP and DGTTT. A disordered region spans residues 525 to 547; that stretch reads PSDKEDSIPPMRGGMGGMGGMDF. A compositionally biased stretch (gly residues) spans 537 to 547; that stretch reads GGMGGMGGMDF.

The protein belongs to the chaperonin (HSP60) family. As to quaternary structure, forms a cylinder of 14 subunits composed of two heptameric rings stacked back-to-back. Interacts with the co-chaperonin GroES.

It localises to the cytoplasm. The enzyme catalyses ATP + H2O + a folded polypeptide = ADP + phosphate + an unfolded polypeptide.. Together with its co-chaperonin GroES, plays an essential role in assisting protein folding. The GroEL-GroES system forms a nano-cage that allows encapsulation of the non-native substrate proteins and provides a physical environment optimized to promote and accelerate protein folding. The chain is Chaperonin GroEL from Rickettsia felis (strain ATCC VR-1525 / URRWXCal2) (Rickettsia azadi).